A 145-amino-acid polypeptide reads, in one-letter code: Putative sterol 14-demethylase-like protein (145 aa).

The helical transmembrane segment at 5-25 (YYTLLKTSVAIIIVFVVAKLI) threads the bilayer.

It belongs to the cytochrome P450 family. In terms of tissue distribution, expressed specifically in roots.

The protein resides in the membrane. The polypeptide is Putative sterol 14-demethylase-like protein (CYP51G2) (Arabidopsis thaliana (Mouse-ear cress)).